The chain runs to 324 residues: Acetyl-coenzyme A carboxylase carboxyl transferase subunit alpha (324 aa).

In terms of domain architecture, CoA carboxyltransferase C-terminal spans 44-298; it reads QLEAKATQLR…KTAIVKSLDD (255 aa).

The protein belongs to the AccA family. Acetyl-CoA carboxylase is a heterohexamer composed of biotin carboxyl carrier protein (AccB), biotin carboxylase (AccC) and two subunits each of ACCase subunit alpha (AccA) and ACCase subunit beta (AccD).

It localises to the cytoplasm. The enzyme catalyses N(6)-carboxybiotinyl-L-lysyl-[protein] + acetyl-CoA = N(6)-biotinyl-L-lysyl-[protein] + malonyl-CoA. It functions in the pathway lipid metabolism; malonyl-CoA biosynthesis; malonyl-CoA from acetyl-CoA: step 1/1. In terms of biological role, component of the acetyl coenzyme A carboxylase (ACC) complex. First, biotin carboxylase catalyzes the carboxylation of biotin on its carrier protein (BCCP) and then the CO(2) group is transferred by the carboxyltransferase to acetyl-CoA to form malonyl-CoA. The protein is Acetyl-coenzyme A carboxylase carboxyl transferase subunit alpha of Trichodesmium erythraeum (strain IMS101).